The chain runs to 206 residues: Dehydration-responsive element-binding protein 2D (206 aa).

A disordered region spans residues 13 to 40 (ANKKQRTVQASSRKGCMRGKGGPDNASC). A DNA-binding region (AP2/ERF) is located at residues 41 to 98 (TYKGVRQRTWGKWVAEIREPNRGARLWLGTFDTSREAALAYDSAARKLYGPEAHLNLP). The tract at residues 102 to 139 (RSYPKTASSPASQTTPSSNTGGKSSSDSESPCSSNEMS) is disordered. Over residues 107 to 139 (TASSPASQTTPSSNTGGKSSSDSESPCSSNEMS) the composition is skewed to low complexity.

It belongs to the AP2/ERF transcription factor family. ERF subfamily.

The protein resides in the nucleus. Putative transcriptional activator that binds specifically to the DNA sequence 5'-[AG]CCGAC-3'. Binding to the C-repeat/DRE element mediates high salinity-inducible transcription. The sequence is that of Dehydration-responsive element-binding protein 2D (DREB2D) from Arabidopsis thaliana (Mouse-ear cress).